Reading from the N-terminus, the 99-residue chain is Bacterial microcompartment shell vertex protein EutN (99 aa).

The BMV domain occupies 5-87; sequence MKLAVVTGQI…VDLCVIGIVD (83 aa).

Belongs to the CcmL/EutN family. Homopentamer with a small central pore.

It localises to the bacterial microcompartment. It functions in the pathway amine and polyamine degradation; ethanolamine degradation. Functionally, probably forms vertices in the bacterial microcompartment (BMC) shell dedicated to ethanolamine degradation. Expression of eutK, eutL, eutM, eutN, eutS (eutSMNLK) in E.coli leads to formation of a single BMC. Coexpression of eutQ with eutSMNLK permits E.coli to make cells with more than one mobile BMC, as is usual in vivo. It may be involved in transporting positively charged molecules into and out of the BMC. The ethanolamine (EA) catabolic bacterial microcompartment (BMC) probably concentrates low levels of ethanolamine catabolic enzymes, concentrates volatile reaction intermediates, keeps the level of toxic acetaldehyde low, generates enough acetyl-CoA to support cell growth, and maintains a pool of free coenzyme A (CoA) and NAD. Its function is as follows. Expression of the eut operon allows this bacteria to use ethanolamine (EA) as a carbon, nitrogen and energy source. It relies on cobalamin (vitamin B12) both as a cofactor for the ethanolamine ammonia-lyase (EAL) activity and to induce the operon. EA enhances bacterial survival in macrophages in a concentration-dependent manner, suggesting it is an important nutrient during infection. This is Bacterial microcompartment shell vertex protein EutN from Salmonella typhimurium (strain LT2 / SGSC1412 / ATCC 700720).